Here is a 449-residue protein sequence, read N- to C-terminus: Heterogeneous nuclear ribonucleoprotein H2 (449 aa).

M1 is modified (N-acetylmethionine). At M2 the chain carries N-acetylmethionine; in Heterogeneous nuclear ribonucleoprotein H2, N-terminally processed. An RRM 1 domain is found at 11 to 90 (FVVKVRGLPW…RYVEVFKSNS (80 aa)). S23 carries the phosphoserine modification. Residue K35 forms a Glycyl lysine isopeptide (Lys-Gly) (interchain with G-Cter in SUMO2) linkage. Phosphoserine occurs at positions 54 and 63. K87 participates in a covalent cross-link: Glycyl lysine isopeptide (Lys-Gly) (interchain with G-Cter in SUMO2). S90 carries the phosphoserine modification. A Glycyl lysine isopeptide (Lys-Gly) (interchain with G-Cter in SUMO2) cross-link involves residue K98. An RRM 2 domain is found at 111-188 (GFVRLRGLPF…RYIEIFKSSR (78 aa)). A Dimethylated arginine; alternate modification is found at R233. An Omega-N-methylarginine; alternate modification is found at R233. A 1-1 repeat occupies 234-249 (GAYGGGYGGYDDYGGY). A 2 X 16 AA Gly-rich approximate repeats region spans residues 234–433 (GAYGGGYGGY…YGGQSSMSGY (200 aa)). Y246 bears the Phosphotyrosine mark. One can recognise an RRM 3 domain in the interval 289-364 (HCVHMRGLPY…RYVELFLNST (76 aa)). S310 is modified (phosphoserine). Repeat copies occupy residues 354–372 (HRYV…GGAY), 374–392 (HSYV…GGAY), and 418–433 (AGYG…MSGY). Residues 354 to 392 (HRYVELFLNSTAGTSGGAYDHSYVELFLNSTAGASGGAY) are 2 X 19 AA perfect repeats.

Component of a ribonucleoprotein complex containing mRNAs and RNA-binding proteins including DDX5, HNRNPH2 and SRSF1 as well as splicing regulator ARVCF. Interacts with TXNL4/DIM1.

Its subcellular location is the nucleus. The protein localises to the nucleoplasm. In terms of biological role, this protein is a component of the heterogeneous nuclear ribonucleoprotein (hnRNP) complexes which provide the substrate for the processing events that pre-mRNAs undergo before becoming functional, translatable mRNAs in the cytoplasm. Binds poly(RG). The polypeptide is Heterogeneous nuclear ribonucleoprotein H2 (Hnrnph2) (Rattus norvegicus (Rat)).